The following is a 1203-amino-acid chain: DNA-directed RNA polymerase subunit beta (1203 aa).

Residues 1167-1203 (LSKYAQQQEEQRKAAAQTDESKTAPATKNESQPNTQD) are disordered. A compositionally biased stretch (polar residues) spans 1190-1203 (APATKNESQPNTQD).

The protein belongs to the RNA polymerase beta chain family. In terms of assembly, the RNAP catalytic core consists of 2 alpha, 1 beta, 1 beta' and 1 omega subunit. When a sigma factor is associated with the core the holoenzyme is formed, which can initiate transcription.

It carries out the reaction RNA(n) + a ribonucleoside 5'-triphosphate = RNA(n+1) + diphosphate. DNA-dependent RNA polymerase catalyzes the transcription of DNA into RNA using the four ribonucleoside triphosphates as substrates. In Levilactobacillus brevis (strain ATCC 367 / BCRC 12310 / CIP 105137 / JCM 1170 / LMG 11437 / NCIMB 947 / NCTC 947) (Lactobacillus brevis), this protein is DNA-directed RNA polymerase subunit beta.